The sequence spans 500 residues: Cytochrome P450 2D15 (500 aa).

Residue Cys-446 coordinates heme.

It belongs to the cytochrome P450 family. Requires heme as cofactor. As to expression, liver. Also detected in several other tissues.

The protein localises to the endoplasmic reticulum membrane. Its subcellular location is the microsome membrane. It catalyses the reaction an organic molecule + reduced [NADPH--hemoprotein reductase] + O2 = an alcohol + oxidized [NADPH--hemoprotein reductase] + H2O + H(+). High activity for the hydroxylation of bunitrolol and imipramine; low activity on debrisoquine. This Canis lupus familiaris (Dog) protein is Cytochrome P450 2D15 (CYP2D15).